Consider the following 1176-residue polypeptide: Carbamoyl phosphate synthase arginine-specific large chain (1176 aa).

The transit peptide at methionine 1–alanine 11 directs the protein to the mitochondrion. Positions serine 70–aspartate 465 are carboxyphosphate synthetic domain. 12 residues coordinate ATP: arginine 197, arginine 237, glycine 243, glycine 244, lysine 273, leucine 275, glutamate 280, glycine 306, threonine 307, histidine 308, glutamine 348, and glutamate 362. The 191-residue stretch at valine 201–leucine 391 folds into the ATP-grasp 1 domain. The Mg(2+) site is built by glutamine 348, glutamate 362, and asparagine 364. Mn(2+) contacts are provided by glutamine 348, glutamate 362, and asparagine 364. The interval proline 466–aspartate 610 is oligomerization domain. The interval valine 611–asparagine 997 is carbamoyl phosphate synthetic domain. Residues serine 734 to methionine 931 enclose the ATP-grasp 2 domain. ATP contacts are provided by arginine 770, glutamine 809, isoleucine 811, glutamate 816, glycine 841, valine 842, histidine 843, serine 844, glutamine 884, and glutamate 902. Residues glutamine 884, glutamate 902, and asparagine 904 each coordinate Mg(2+). The Mn(2+) site is built by glutamine 884, glutamate 902, and asparagine 904. An allosteric domain region spans residues glycine 998 to lysine 1137. Residues methionine 999 to threonine 1154 enclose the MGS-like domain.

This sequence belongs to the CarB family. In terms of assembly, heterodimer composed of 2 chains; the small (or glutamine) chain promotes the hydrolysis of glutamine to ammonia, which is used by the large (or ammonia) chain to synthesize carbamoyl phosphate. Mg(2+) is required as a cofactor. The cofactor is Mn(2+).

It is found in the mitochondrion. The catalysed reaction is hydrogencarbonate + L-glutamine + 2 ATP + H2O = carbamoyl phosphate + L-glutamate + 2 ADP + phosphate + 2 H(+). It carries out the reaction hydrogencarbonate + NH4(+) + 2 ATP = carbamoyl phosphate + 2 ADP + phosphate + 2 H(+). It participates in amino-acid biosynthesis; L-arginine biosynthesis; carbamoyl phosphate from bicarbonate: step 1/1. Its function is as follows. Large subunit of the arginine-specific carbamoyl phosphate synthase (CPSase). CPSase catalyzes the formation of carbamoyl phosphate from the ammonia moiety of glutamine, hydrogencarbonate, and phosphate donated by ATP, constituting the first step of 2 biosynthetic pathways, one leading to arginine and/or urea and the other to pyrimidine nucleotides. The large subunit (synthetase) binds the substrates ammonia (free or transferred from glutamine from the small subunit), hydrogencarbonate and ATP and carries out an ATP-coupled ligase reaction, activating hydrogencarbonate by forming carboxy phosphate which reacts with ammonia to form carbamoyl phosphate. The protein is Carbamoyl phosphate synthase arginine-specific large chain (argA) of Cutaneotrichosporon cutaneum (Yeast).